We begin with the raw amino-acid sequence, 268 residues long: Undecaprenyl-diphosphatase (268 aa).

The next 7 membrane-spanning stretches (helical) occupy residues Ser5–Ser25, Gly43–Phe63, Leu84–Ile104, Phe109–Ile129, Ala184–Leu204, Ile213–Val233, and Pro248–Gly268.

The protein belongs to the UppP family.

It is found in the cell inner membrane. It carries out the reaction di-trans,octa-cis-undecaprenyl diphosphate + H2O = di-trans,octa-cis-undecaprenyl phosphate + phosphate + H(+). Catalyzes the dephosphorylation of undecaprenyl diphosphate (UPP). Confers resistance to bacitracin. In Sinorhizobium medicae (strain WSM419) (Ensifer medicae), this protein is Undecaprenyl-diphosphatase.